A 722-amino-acid chain; its full sequence is Polyribonucleotide nucleotidyltransferase (722 aa).

The Mg(2+) site is built by Asp-487 and Asp-493. The KH domain occupies 554–613 (PRMVSFKIHPDKIREVIGKGGATIQALTKETGCSIDIKDDGTVTIASTSAEGMAEAKARI). Residues 623-691 (GKIYEGPVVK…ERGRLRLSLK (69 aa)) form the S1 motif domain.

This sequence belongs to the polyribonucleotide nucleotidyltransferase family. Mg(2+) is required as a cofactor.

The protein localises to the cytoplasm. It catalyses the reaction RNA(n+1) + phosphate = RNA(n) + a ribonucleoside 5'-diphosphate. Involved in mRNA degradation. Catalyzes the phosphorolysis of single-stranded polyribonucleotides processively in the 3'- to 5'-direction. This chain is Polyribonucleotide nucleotidyltransferase, found in Polynucleobacter necessarius subsp. necessarius (strain STIR1).